The chain runs to 197 residues: Recombination protein RecR (197 aa).

A C4-type zinc finger spans residues 57–72 (CSVCFGITEDDPCRFC). One can recognise a Toprim domain in the interval 79 to 174 (GAICVVEEPQ…RVTRLAHGIP (96 aa)).

It belongs to the RecR family.

Functionally, may play a role in DNA repair. It seems to be involved in an RecBC-independent recombinational process of DNA repair. It may act with RecF and RecO. This is Recombination protein RecR from Geobacter sulfurreducens (strain ATCC 51573 / DSM 12127 / PCA).